The following is a 416-amino-acid chain: Cell division protein FtsZ (416 aa).

Residues 20–24, 107–109, Glu-138, Arg-142, and Asp-186 each bind GTP; these read GGGVN and GTG. Over residues 319–335 the composition is skewed to polar residues; that stretch reads QETNANNSSPAQRQAES. The segment at 319 to 416 is disordered; it reads QETNANNSSP…DSLDFPDFLK (98 aa). Residues 376 to 392 are compositionally biased toward acidic residues; sequence QDDDIPDDAGFDVDLPA. Basic and acidic residues predominate over residues 404 to 416; the sequence is ARKDSLDFPDFLK.

The protein belongs to the FtsZ family. As to quaternary structure, homodimer. Polymerizes to form a dynamic ring structure in a strictly GTP-dependent manner. Interacts directly with several other division proteins.

Its subcellular location is the cytoplasm. Its function is as follows. Essential cell division protein that forms a contractile ring structure (Z ring) at the future cell division site. The regulation of the ring assembly controls the timing and the location of cell division. One of the functions of the FtsZ ring is to recruit other cell division proteins to the septum to produce a new cell wall between the dividing cells. Binds GTP and shows GTPase activity. This chain is Cell division protein FtsZ, found in Kocuria rhizophila (strain ATCC 9341 / DSM 348 / NBRC 103217 / DC2201).